The chain runs to 103 residues: Small ubiquitin-related modifier 2 (103 aa).

The region spanning 15–92 (AHINLKVKGQ…IDAMLHQTGG (78 aa)) is the Ubiquitin-like domain. Glycine 92 is covalently cross-linked (Glycyl lysine isopeptide (Gly-Lys) (interchain with K-? in acceptor proteins)).

Belongs to the ubiquitin family. SUMO subfamily. Interacts with SAE2, SCE1, SIZ1 and MMS21. Interacts with HSFA2. Covalently attached to ABI5, FLD, GTE3, HSFA2 and ICE1.

Its subcellular location is the nucleus. The protein localises to the cytoplasm. Its function is as follows. Ubiquitin-like protein which can be covalently attached to target lysines as a monomer. Does not seem to be involved in protein degradation and may function as an antagonist of ubiquitin in the degradation process. Required for the massive protein sumoylation in the nucleus induced by heat shock and controlled by SIZ1. This chain is Small ubiquitin-related modifier 2, found in Arabidopsis thaliana (Mouse-ear cress).